Reading from the N-terminus, the 545-residue chain is CTP synthase (545 aa).

An amidoligase domain region spans residues 1–266 (MTTKYIFVTG…DEICVKRFGL (266 aa)). CTP is bound at residue serine 14. Serine 14 contributes to the UTP binding site. ATP-binding positions include 15–20 (SLGKGI) and aspartate 72. Residues aspartate 72 and glutamate 140 each contribute to the Mg(2+) site. Residues 147-149 (DIE), 187-192 (KTKPTQ), and lysine 223 each bind CTP. Residues 187–192 (KTKPTQ) and lysine 223 contribute to the UTP site. 239–241 (RDV) lines the ATP pocket. One can recognise a Glutamine amidotransferase type-1 domain in the interval 291–542 (IIGMVGKYTE…IKSAIDHQQG (252 aa)). Glycine 352 is a binding site for L-glutamine. Cysteine 379 functions as the Nucleophile; for glutamine hydrolysis in the catalytic mechanism. L-glutamine contacts are provided by residues 380-383 (LGMQ), glutamate 403, and arginine 470. Active-site residues include histidine 515 and glutamate 517.

This sequence belongs to the CTP synthase family. In terms of assembly, homotetramer.

The catalysed reaction is UTP + L-glutamine + ATP + H2O = CTP + L-glutamate + ADP + phosphate + 2 H(+). It catalyses the reaction L-glutamine + H2O = L-glutamate + NH4(+). It carries out the reaction UTP + NH4(+) + ATP = CTP + ADP + phosphate + 2 H(+). The protein operates within pyrimidine metabolism; CTP biosynthesis via de novo pathway; CTP from UDP: step 2/2. With respect to regulation, allosterically activated by GTP, when glutamine is the substrate; GTP has no effect on the reaction when ammonia is the substrate. The allosteric effector GTP functions by stabilizing the protein conformation that binds the tetrahedral intermediate(s) formed during glutamine hydrolysis. Inhibited by the product CTP, via allosteric rather than competitive inhibition. In terms of biological role, catalyzes the ATP-dependent amination of UTP to CTP with either L-glutamine or ammonia as the source of nitrogen. Regulates intracellular CTP levels through interactions with the four ribonucleotide triphosphates. The protein is CTP synthase of Psychromonas ingrahamii (strain DSM 17664 / CCUG 51855 / 37).